Reading from the N-terminus, the 207-residue chain is MADS-box protein AGL71 (207 aa).

In terms of domain architecture, MADS-box spans 1–61; sequence MVRGKIEIKK…GRLHEYSSSQ (61 aa). The K-box domain occupies 88-178; the sequence is LQELKMEIDR…LEEVNMHHSS (91 aa).

It localises to the nucleus. Its function is as follows. MADS-box transcription factor that acts with AGL42 and AGL72 in the control of flowering time. Promotes flowering at the shoot apical and axillary meristems. Seems to act through a gibberellin-dependent pathway. Interacts genetically with SOC1 and its expression is directly regulated by SOC1. This chain is MADS-box protein AGL71 (AGL71), found in Arabidopsis thaliana (Mouse-ear cress).